The sequence spans 601 residues: Elongation factor 4 (601 aa).

The region spanning 5–187 (EHIRNFSIIA…AIVERLPAPE (183 aa)) is the tr-type G domain. Residues 17 to 22 (DHGKST) and 134 to 137 (NKVD) each bind GTP.

The protein belongs to the TRAFAC class translation factor GTPase superfamily. Classic translation factor GTPase family. LepA subfamily.

Its subcellular location is the cell inner membrane. The enzyme catalyses GTP + H2O = GDP + phosphate + H(+). Required for accurate and efficient protein synthesis under certain stress conditions. May act as a fidelity factor of the translation reaction, by catalyzing a one-codon backward translocation of tRNAs on improperly translocated ribosomes. Back-translocation proceeds from a post-translocation (POST) complex to a pre-translocation (PRE) complex, thus giving elongation factor G a second chance to translocate the tRNAs correctly. Binds to ribosomes in a GTP-dependent manner. This Nitratidesulfovibrio vulgaris (strain DSM 19637 / Miyazaki F) (Desulfovibrio vulgaris) protein is Elongation factor 4.